We begin with the raw amino-acid sequence, 269 residues long: Indole-3-glycerol phosphate synthase (269 aa).

This sequence belongs to the TrpC family.

It carries out the reaction 1-(2-carboxyphenylamino)-1-deoxy-D-ribulose 5-phosphate + H(+) = (1S,2R)-1-C-(indol-3-yl)glycerol 3-phosphate + CO2 + H2O. Its pathway is amino-acid biosynthesis; L-tryptophan biosynthesis; L-tryptophan from chorismate: step 4/5. The chain is Indole-3-glycerol phosphate synthase from Streptomyces griseus subsp. griseus (strain JCM 4626 / CBS 651.72 / NBRC 13350 / KCC S-0626 / ISP 5235).